The primary structure comprises 327 residues: Phenylalanine--tRNA ligase alpha subunit (327 aa).

Glutamate 252 contacts Mg(2+).

It belongs to the class-II aminoacyl-tRNA synthetase family. Phe-tRNA synthetase alpha subunit type 1 subfamily. Tetramer of two alpha and two beta subunits. Requires Mg(2+) as cofactor.

Its subcellular location is the cytoplasm. It carries out the reaction tRNA(Phe) + L-phenylalanine + ATP = L-phenylalanyl-tRNA(Phe) + AMP + diphosphate + H(+). In Vibrio vulnificus (strain CMCP6), this protein is Phenylalanine--tRNA ligase alpha subunit.